A 72-amino-acid chain; its full sequence is UPF0270 protein YheU (72 aa).

It belongs to the UPF0270 family.

The sequence is that of UPF0270 protein YheU from Salmonella arizonae (strain ATCC BAA-731 / CDC346-86 / RSK2980).